The primary structure comprises 363 residues: Chorismate synthase (363 aa).

Positions 42–61 (QRDLDRRKPGTSRHTTQRQE) are disordered. NADP(+) contacts are provided by Arg48 and Arg54. Residues 125–127 (RSS), 237–238 (NA), Gly277, 292–296 (KPTSS), and Arg318 contribute to the FMN site.

The protein belongs to the chorismate synthase family. Homotetramer. It depends on FMNH2 as a cofactor.

It carries out the reaction 5-O-(1-carboxyvinyl)-3-phosphoshikimate = chorismate + phosphate. It functions in the pathway metabolic intermediate biosynthesis; chorismate biosynthesis; chorismate from D-erythrose 4-phosphate and phosphoenolpyruvate: step 7/7. Its function is as follows. Catalyzes the anti-1,4-elimination of the C-3 phosphate and the C-6 proR hydrogen from 5-enolpyruvylshikimate-3-phosphate (EPSP) to yield chorismate, which is the branch point compound that serves as the starting substrate for the three terminal pathways of aromatic amino acid biosynthesis. This reaction introduces a second double bond into the aromatic ring system. The protein is Chorismate synthase of Pseudomonas aeruginosa (strain LESB58).